A 496-amino-acid polypeptide reads, in one-letter code: Flotillin-like protein 3 (496 aa).

Cys-37 is lipidated: S-palmitoyl cysteine. Positions 301–328 (VVREAELQLEVERKNALRLTEKLKAEKL) form a coiled coil.

Belongs to the band 7/mec-2 family. Flotillin subfamily. Post-translationally, may be palmitoylated.

It is found in the cell membrane. The protein localises to the membrane. Its subcellular location is the caveola. Its function is as follows. May act as a scaffolding protein within caveolar membranes, functionally participating in formation of caveolae or caveolae-like vesicles. This is Flotillin-like protein 3 (FLOT3) from Oryza sativa subsp. japonica (Rice).